A 353-amino-acid polypeptide reads, in one-letter code: Sorbitol dehydrogenase (353 aa).

C45 provides a ligand contact to Zn(2+). Position 51 (Y51) interacts with substrate. Zn(2+)-binding residues include H70 and E71. E156 contributes to the substrate binding site. NAD(+) contacts are provided by residues V184, D204, R209, 271 to 273 (VGL), and 296 to 298 (IFR). 2 residues coordinate substrate: R298 and Y299.

This sequence belongs to the zinc-containing alcohol dehydrogenase family. Homotetramer. It depends on Zn(2+) as a cofactor.

The enzyme catalyses keto-D-fructose + NADH + H(+) = D-sorbitol + NAD(+). It carries out the reaction xylitol + NAD(+) = D-xylulose + NADH + H(+). It catalyses the reaction L-iditol + NAD(+) = keto-L-sorbose + NADH + H(+). Functionally, polyol dehydrogenase that catalyzes the NAD(+)-dependent oxidation of various sugar alcohols. Is mostly active with D-sorbitol (D-glucitol), xylitol and L-iditol as substrates, leading to the C2-oxidized products D-fructose, D-xylulose and L-sorbose, respectively. The polypeptide is Sorbitol dehydrogenase (Bacillus subtilis (strain 168)).